The chain runs to 75 residues: Translation initiation factor IF-1 (75 aa).

Residues 1 to 75 enclose the S1-like domain; that stretch reads MANLPKEQKL…SKGRIVYRFK (75 aa).

The protein belongs to the IF-1 family. In terms of assembly, component of the 30S ribosomal translation pre-initiation complex which assembles on the 30S ribosome in the order IF-2 and IF-3, IF-1 and N-formylmethionyl-tRNA(fMet); mRNA recruitment can occur at any time during PIC assembly.

The protein localises to the cytoplasm. In terms of biological role, one of the essential components for the initiation of protein synthesis. Stabilizes the binding of IF-2 and IF-3 on the 30S subunit to which N-formylmethionyl-tRNA(fMet) subsequently binds. Helps modulate mRNA selection, yielding the 30S pre-initiation complex (PIC). Upon addition of the 50S ribosomal subunit IF-1, IF-2 and IF-3 are released leaving the mature 70S translation initiation complex. This chain is Translation initiation factor IF-1, found in Mesomycoplasma hyopneumoniae (strain 232) (Mycoplasma hyopneumoniae).